Reading from the N-terminus, the 550-residue chain is DNA mismatch repair protein MutL (550 aa).

This sequence belongs to the DNA mismatch repair MutL/HexB family.

In terms of biological role, this protein is involved in the repair of mismatches in DNA. It is required for dam-dependent methyl-directed DNA mismatch repair. May act as a 'molecular matchmaker', a protein that promotes the formation of a stable complex between two or more DNA-binding proteins in an ATP-dependent manner without itself being part of a final effector complex. This chain is DNA mismatch repair protein MutL, found in Microcystis aeruginosa (strain NIES-843 / IAM M-2473).